Here is a 175-residue protein sequence, read N- to C-terminus: uncharacterized protein (175 aa).

It localises to the cytoplasm. It is found in the nucleus. This is an uncharacterized protein from Schizosaccharomyces pombe (strain 972 / ATCC 24843) (Fission yeast).